The primary structure comprises 307 residues: UPF0282 protein PH1002 (307 aa).

Belongs to the UPF0282 family.

This is UPF0282 protein PH1002 from Pyrococcus horikoshii (strain ATCC 700860 / DSM 12428 / JCM 9974 / NBRC 100139 / OT-3).